The primary structure comprises 302 residues: N-acetyl-D-glucosamine kinase (302 aa).

Residues 4 to 11 (GFDVGGTK) and 133 to 140 (GFGGGFIY) contribute to the ATP site. Residues histidine 157, cysteine 177, cysteine 179, and cysteine 184 each contribute to the Zn(2+) site.

Belongs to the ROK (NagC/XylR) family. NagK subfamily.

The catalysed reaction is N-acetyl-D-glucosamine + ATP = N-acetyl-D-glucosamine 6-phosphate + ADP + H(+). The protein operates within cell wall biogenesis; peptidoglycan recycling. Its function is as follows. Catalyzes the phosphorylation of N-acetyl-D-glucosamine (GlcNAc) derived from cell-wall degradation, yielding GlcNAc-6-P. The polypeptide is N-acetyl-D-glucosamine kinase (Vibrio parahaemolyticus serotype O3:K6 (strain RIMD 2210633)).